The primary structure comprises 485 residues: MDLTKLTAHELKDILSNKEVKAEEITRAFLDRINLVDNKLGAYLYVSEEEAIKKAKEIDGKIEKNEELKALSGIPVGIKDNINVKGMQNTCASKILQGYTSPYDAHVTEKIKKEEGIILGKLNMDEFAMGSSTENSAFKLAKNPWDLERVPGGSSGGSAVAVSGCEATLSLGTDTGGSVRQPASFCGIVGLKPTYGRISRSGVVAFGSTLDQVGPMGKDVEDCALLTSAIAGLDKKDFTTADKEVPDYKKSLTKDIKGKKIGIPKEFFGEGLDEKVRKSVEEAIKVLEENGAEVKPCSLPLMDYALSAYYIISSAEASSNLARFDGIRYGYRSKNFKDAKDIYLKSRSEGFGDEVKRRIMLGTYVLSAGYYDAYYKKALKVRKLIKDDFQRVFKDFDAIVSPTSPTTAFKVGEKKDDVMSMYLSDIYTVPISVAGVPAISLPCGMIDGLPVGLQIISDYFKEDVLFNLAYSYEQSVDFYKMRADF.

Active-site charge relay system residues include Lys-79 and Ser-154. Ser-178 functions as the Acyl-ester intermediate in the catalytic mechanism.

This sequence belongs to the amidase family. GatA subfamily. As to quaternary structure, heterotrimer of A, B and C subunits.

The enzyme catalyses L-glutamyl-tRNA(Gln) + L-glutamine + ATP + H2O = L-glutaminyl-tRNA(Gln) + L-glutamate + ADP + phosphate + H(+). In terms of biological role, allows the formation of correctly charged Gln-tRNA(Gln) through the transamidation of misacylated Glu-tRNA(Gln) in organisms which lack glutaminyl-tRNA synthetase. The reaction takes place in the presence of glutamine and ATP through an activated gamma-phospho-Glu-tRNA(Gln). The protein is Glutamyl-tRNA(Gln) amidotransferase subunit A of Clostridium botulinum (strain Loch Maree / Type A3).